A 120-amino-acid chain; its full sequence is Large ribosomal subunit protein eL8 (120 aa).

It belongs to the eukaryotic ribosomal protein eL8 family. Part of the 50S ribosomal subunit. Probably part of the RNase P complex.

The protein resides in the cytoplasm. Its function is as follows. Multifunctional RNA-binding protein that recognizes the K-turn motif in ribosomal RNA, the RNA component of RNase P, box H/ACA, box C/D and box C'/D' sRNAs. The protein is Large ribosomal subunit protein eL8 of Haloquadratum walsbyi (strain DSM 16790 / HBSQ001).